An 89-amino-acid chain; its full sequence is Elongation factor 1-beta (89 aa).

This sequence belongs to the EF-1-beta/EF-1-delta family.

In terms of biological role, promotes the exchange of GDP for GTP in EF-1-alpha/GDP, thus allowing the regeneration of EF-1-alpha/GTP that could then be used to form the ternary complex EF-1-alpha/GTP/AAtRNA. The chain is Elongation factor 1-beta from Methanococcus vannielii (strain ATCC 35089 / DSM 1224 / JCM 13029 / OCM 148 / SB).